The primary structure comprises 360 residues: Aminomethyltransferase (360 aa).

This sequence belongs to the GcvT family. The glycine cleavage system is composed of four proteins: P, T, L and H.

It catalyses the reaction N(6)-[(R)-S(8)-aminomethyldihydrolipoyl]-L-lysyl-[protein] + (6S)-5,6,7,8-tetrahydrofolate = N(6)-[(R)-dihydrolipoyl]-L-lysyl-[protein] + (6R)-5,10-methylene-5,6,7,8-tetrahydrofolate + NH4(+). In terms of biological role, the glycine cleavage system catalyzes the degradation of glycine. In Exiguobacterium sibiricum (strain DSM 17290 / CCUG 55495 / CIP 109462 / JCM 13490 / 255-15), this protein is Aminomethyltransferase.